The chain runs to 189 residues: Putative manganese efflux pump MntP (189 aa).

6 helical membrane passes run 3-23 (PVATLFLAFAMSTDAFAAAIG), 41-61 (LIFGVIEALTPLVGWFLGKAA), 62-82 (AQYVSAWDHWIAFSLLLVLGA), 104-124 (FWLLALTGFATSIDAMAVGAG), 132-152 (IYSTAAAIGLATMAMVTIGVM), and 168-188 (AGGIVLIGIGSTILAEHLNIF).

Belongs to the MntP (TC 9.B.29) family.

Its subcellular location is the cell inner membrane. In terms of biological role, probably functions as a manganese efflux pump. The sequence is that of Putative manganese efflux pump MntP from Paraburkholderia phytofirmans (strain DSM 17436 / LMG 22146 / PsJN) (Burkholderia phytofirmans).